A 500-amino-acid chain; its full sequence is NADH-quinone oxidoreductase subunit N (500 aa).

14 helical membrane passes run 13–33, 42–62, 79–99, 111–131, 133–153, 168–188, 211–231, 245–265, 281–301, 321–341, 342–362, 386–406, 424–444, and 461–481; these read VMMPEFIILGVAVALSLIDLF, LLGLFAFVGIAVSFVSLLSLW, FAKSFKALLLIGSALVLLLSI, GEFYYLFLTALLGAMMMASSG, LITLFVGLELLSISSYILVAI, VITGSIATAITLFGMSYIFGF, YVLSLAFLLTFVGLSFKLASA, TTPVVSFLSVVSKTAGFVIVL, ASMLMTFAPYIAFLSGATMII, VAHAGYVLVAFASLSMFMFEA, IWFYLLAYVFMTIGAFAILQV, AIAMTIFLLSLAGIPGTAGFI, VLASIMVITTIISYVYYFGIF, and PPGVIAVVVICVIGTVLLGVF.

It belongs to the complex I subunit 2 family. In terms of assembly, NDH-1 is composed of 14 different subunits. Subunits NuoA, H, J, K, L, M, N constitute the membrane sector of the complex.

Its subcellular location is the cell membrane. The catalysed reaction is a quinone + NADH + 5 H(+)(in) = a quinol + NAD(+) + 4 H(+)(out). Its function is as follows. NDH-1 shuttles electrons from NADH, via FMN and iron-sulfur (Fe-S) centers, to quinones in the respiratory chain. The immediate electron acceptor for the enzyme in this species is believed to be a menaquinone. Couples the redox reaction to proton translocation (for every two electrons transferred, four hydrogen ions are translocated across the cytoplasmic membrane), and thus conserves the redox energy in a proton gradient. The protein is NADH-quinone oxidoreductase subunit N of Anoxybacillus flavithermus (strain DSM 21510 / WK1).